We begin with the raw amino-acid sequence, 371 residues long: tRNA-specific 2-thiouridylase MnmA (371 aa).

ATP contacts are provided by residues 13–20 (GMSGGVDS) and methionine 39. The interaction with target base in tRNA stretch occupies residues 99–101 (NPD). Residue cysteine 104 is the Nucleophile of the active site. Cysteine 104 and cysteine 200 are joined by a disulfide. Glycine 128 contacts ATP. The tract at residues 150–152 (KDQ) is interaction with tRNA. Cysteine 200 acts as the Cysteine persulfide intermediate in catalysis. An interaction with tRNA region spans residues 308–309 (RY).

This sequence belongs to the MnmA/TRMU family.

The protein resides in the cytoplasm. It catalyses the reaction S-sulfanyl-L-cysteinyl-[protein] + uridine(34) in tRNA + AH2 + ATP = 2-thiouridine(34) in tRNA + L-cysteinyl-[protein] + A + AMP + diphosphate + H(+). Its function is as follows. Catalyzes the 2-thiolation of uridine at the wobble position (U34) of tRNA, leading to the formation of s(2)U34. This Bacillus thuringiensis (strain Al Hakam) protein is tRNA-specific 2-thiouridylase MnmA.